The primary structure comprises 141 residues: Putative pre-16S rRNA nuclease (141 aa).

It belongs to the YqgF nuclease family.

It is found in the cytoplasm. Functionally, could be a nuclease involved in processing of the 5'-end of pre-16S rRNA. The chain is Putative pre-16S rRNA nuclease from Aliivibrio fischeri (strain ATCC 700601 / ES114) (Vibrio fischeri).